Reading from the N-terminus, the 735-residue chain is 5-methyltetrahydropteroyltriglutamate--homocysteine methyltransferase (735 aa).

5-methyltetrahydropteroyltri-L-glutamate contacts are provided by residues 15–18 (REFK) and lysine 104. L-homocysteine contacts are provided by residues 409-411 (IGS) and glutamate 462. L-methionine-binding positions include 409-411 (IGS) and glutamate 462. Residues 493 to 494 (RC) and tryptophan 539 contribute to the 5-methyltetrahydropteroyltri-L-glutamate site. Position 577 (aspartate 577) interacts with L-homocysteine. Aspartate 577 lines the L-methionine pocket. Glutamate 583 contributes to the 5-methyltetrahydropteroyltri-L-glutamate binding site. Residues histidine 618, cysteine 620, and glutamate 642 each coordinate Zn(2+). The Proton donor role is filled by histidine 672. Cysteine 704 lines the Zn(2+) pocket.

It belongs to the vitamin-B12 independent methionine synthase family. It depends on Zn(2+) as a cofactor.

It catalyses the reaction 5-methyltetrahydropteroyltri-L-glutamate + L-homocysteine = tetrahydropteroyltri-L-glutamate + L-methionine. It participates in amino-acid biosynthesis; L-methionine biosynthesis via de novo pathway; L-methionine from L-homocysteine (MetE route): step 1/1. In terms of biological role, catalyzes the transfer of a methyl group from 5-methyltetrahydrofolate to homocysteine resulting in methionine formation. The protein is 5-methyltetrahydropteroyltriglutamate--homocysteine methyltransferase of Thermotoga petrophila (strain ATCC BAA-488 / DSM 13995 / JCM 10881 / RKU-1).